A 591-amino-acid polypeptide reads, in one-letter code: Probable methyltransferase PMT6 (591 aa).

Residues 1–13 (MRGSVIGAERSGQ) are Cytoplasmic-facing. The helical; Signal-anchor for type II membrane protein transmembrane segment at 14–34 (TIMVALVLMVGSFYTGSLFGT) threads the bilayer. Over 35–591 (NQPIYVSHPS…FCRKRFWAII (557 aa)) the chain is Lumenal. N-linked (GlcNAc...) asparagine glycosylation is found at asparagine 87, asparagine 99, asparagine 146, asparagine 193, asparagine 323, asparagine 436, asparagine 473, and asparagine 515.

It belongs to the methyltransferase superfamily.

The protein localises to the endoplasmic reticulum membrane. The chain is Probable methyltransferase PMT6 from Arabidopsis thaliana (Mouse-ear cress).